The chain runs to 293 residues: PHD finger protein 11A (293 aa).

The C2HC pre-PHD-type zinc-finger motif lies at 25 to 61 (KRTCALCPEGHEWSQIYFSPSANIVAHENCLLYSSGL). A PHD-type; degenerate zinc finger spans residues 91 to 143 (LKCSFCKNKGATMGYDLQSCTKNYHLSCAMEDHAILQVDEDHGTYKLFCQKHA). The interval 262-293 (SSSTSGSLLPPEDHQVRCQESPEVQAGSGDSL) is disordered.

The protein localises to the nucleus. The protein is PHD finger protein 11A (Phf11a) of Mus musculus (Mouse).